A 204-amino-acid polypeptide reads, in one-letter code: GTP cyclohydrolase 1 (204 aa).

Residues Cys93, His96, and Cys164 each coordinate Zn(2+).

The protein belongs to the GTP cyclohydrolase I family. Toroid-shaped homodecamer, composed of two pentamers of five dimers.

The enzyme catalyses GTP + H2O = 7,8-dihydroneopterin 3'-triphosphate + formate + H(+). It participates in cofactor biosynthesis; 7,8-dihydroneopterin triphosphate biosynthesis; 7,8-dihydroneopterin triphosphate from GTP: step 1/1. This chain is GTP cyclohydrolase 1, found in Rhizobium meliloti (strain 1021) (Ensifer meliloti).